An 870-amino-acid chain; its full sequence is Protein translocase subunit SecA (870 aa).

ATP contacts are provided by residues Gln86, 104–108 (GEGKT), and Asp499. 4 residues coordinate Zn(2+): Cys854, Cys856, Cys865, and His866.

This sequence belongs to the SecA family. As to quaternary structure, monomer and homodimer. Part of the essential Sec protein translocation apparatus which comprises SecA, SecYEG and auxiliary proteins SecDF-YajC and YidC. The cofactor is Zn(2+).

Its subcellular location is the cell inner membrane. The protein localises to the cytoplasm. It carries out the reaction ATP + H2O + cellular proteinSide 1 = ADP + phosphate + cellular proteinSide 2.. Functionally, part of the Sec protein translocase complex. Interacts with the SecYEG preprotein conducting channel. Has a central role in coupling the hydrolysis of ATP to the transfer of proteins into and across the cell membrane, serving both as a receptor for the preprotein-SecB complex and as an ATP-driven molecular motor driving the stepwise translocation of polypeptide chains across the membrane. The sequence is that of Protein translocase subunit SecA from Ehrlichia ruminantium (strain Welgevonden).